A 67-amino-acid chain; its full sequence is Conotoxin Cal6.35 (67 aa).

A signal peptide spans 1-22; the sequence is MKLTCVLIVAVLILTACQVIAA. Cystine bridges form between cysteine 43/cysteine 53, cysteine 46/cysteine 59, and cysteine 52/cysteine 66.

It belongs to the conotoxin O1 superfamily. Expressed by the venom duct.

The protein localises to the secreted. In terms of biological role, probable neurotoxin. The chain is Conotoxin Cal6.35 from Californiconus californicus (California cone).